Here is a 463-residue protein sequence, read N- to C-terminus: MSTSFACTTCTVAFNNAESQKIHWKSDWHHYNLKRKVASLPPLSAEVFAGKILSIQKQNEEVQKKAEFYQNCEVCNKKFYSEGAYSSHMASKKHRDNLSKFQRNSRIKKLQSEDASSIASSTLSMGEPVVDSEIEEEEDLASQLTSRAISLSNLSLHGRESEPSKTELATSIPQSNEASKSHLFTQEPTPEEIEAELARRSSQRLSPRDCLFCAASFSSFDTCKKHMKASHSLYIPEREYLVDEPSLFDYLAEKISIGFTCLTCNREFKSLEAVRAHMQQKGHTSIAYDTEDEQLELSDFYDFTTSYPDYAVKQDETVVEEDGSSGEGDWEDVSDDSDNSSLDSLEMGRVPIADEYELHLPSGNRVGHRSLSRYFRQNLHSSSTAVGDGASIHQNVARRAMSGNARAYRQAVETSIAGVRDGRKNYSASHIKSFQDQRRREEFANKMGIKNNTKKHFRDALLQ.

2 consecutive C2H2-type zinc fingers follow at residues 5 to 30 and 70 to 94; these read FACT…DWHH and QNCE…SKKH. Positions 109–136 are disordered; the sequence is KLQSEDASSIASSTLSMGEPVVDSEIEE. The span at 113–124 shows a compositional bias: polar residues; it reads EDASSIASSTLS. Residues S150 and S155 each carry the phosphoserine modification. Residues 155–189 form a disordered region; it reads SLHGRESEPSKTELATSIPQSNEASKSHLFTQEPT. Over residues 167 to 188 the composition is skewed to polar residues; the sequence is ELATSIPQSNEASKSHLFTQEP. 2 consecutive C2H2-type zinc fingers follow at residues 208-231 and 259-283; these read RDCL…KASH and FTCL…QKGH. Over residues 317–338 the composition is skewed to acidic residues; that stretch reads TVVEEDGSSGEGDWEDVSDDSD. Disordered stretches follow at residues 317-341 and 444-463; these read TVVE…DNSS and ANKM…ALLQ.

Belongs to the REI1 family. Associates with nascent pre-60S particles that have not yet entered the translating pool, and is released from mature 60S subunits.

Its subcellular location is the cytoplasm. Pre-60S-associated factor involved in the cytoplasmic maturation of the 60S subunit. Involved in the dissociation and recycling of other late pre-60S factors before newly synthesized large ribosomal subunits enter translation. The sequence is that of Cytoplasmic 60S subunit biogenesis factor SPCC550.15c from Schizosaccharomyces pombe (strain 972 / ATCC 24843) (Fission yeast).